A 205-amino-acid chain; its full sequence is MIGWLKGDVQHRDQKGSRNLVLIACGGVGYDVQLIERDWQAVSTDQRHEFWIHQVVSADNLQLFGFLQLAERDLFRELIQVSGVGPQAGLALLNACAYKELVTALVHSDLKTLCRAKGVGKRTAERLALELRTRLTDSVASTGPERNQLDPVAPDLIATLETLGFETHEIRDALQRLNGMGGPQDGDDDDAWLRACIKLMSSTDP.

Residues 1–67 (MIGWLKGDVQ…ADNLQLFGFL (67 aa)) are domain I. A domain II region spans residues 68–146 (QLAERDLFRE…DSVASTGPER (79 aa)). Residues 147–155 (NQLDPVAPD) are flexible linker. The segment at 155 to 205 (DLIATLETLGFETHEIRDALQRLNGMGGPQDGDDDDAWLRACIKLMSSTDP) is domain III.

Belongs to the RuvA family. Homotetramer. Forms an RuvA(8)-RuvB(12)-Holliday junction (HJ) complex. HJ DNA is sandwiched between 2 RuvA tetramers; dsDNA enters through RuvA and exits via RuvB. An RuvB hexamer assembles on each DNA strand where it exits the tetramer. Each RuvB hexamer is contacted by two RuvA subunits (via domain III) on 2 adjacent RuvB subunits; this complex drives branch migration. In the full resolvosome a probable DNA-RuvA(4)-RuvB(12)-RuvC(2) complex forms which resolves the HJ.

It localises to the cytoplasm. The RuvA-RuvB-RuvC complex processes Holliday junction (HJ) DNA during genetic recombination and DNA repair, while the RuvA-RuvB complex plays an important role in the rescue of blocked DNA replication forks via replication fork reversal (RFR). RuvA specifically binds to HJ cruciform DNA, conferring on it an open structure. The RuvB hexamer acts as an ATP-dependent pump, pulling dsDNA into and through the RuvAB complex. HJ branch migration allows RuvC to scan DNA until it finds its consensus sequence, where it cleaves and resolves the cruciform DNA. In Parasynechococcus marenigrum (strain WH8102), this protein is Holliday junction branch migration complex subunit RuvA.